The following is a 470-amino-acid chain: 3-isopropylmalate dehydratase large subunit (470 aa).

Residues 294–307 (PDQNTGISGSTPNP) are compositionally biased toward polar residues. The disordered stretch occupies residues 294–313 (PDQNTGISGSTPNPSDAADD). [4Fe-4S] cluster is bound by residues cysteine 347, cysteine 407, and cysteine 410.

The protein belongs to the aconitase/IPM isomerase family. LeuC type 1 subfamily. Heterodimer of LeuC and LeuD. It depends on [4Fe-4S] cluster as a cofactor.

It catalyses the reaction (2R,3S)-3-isopropylmalate = (2S)-2-isopropylmalate. It functions in the pathway amino-acid biosynthesis; L-leucine biosynthesis; L-leucine from 3-methyl-2-oxobutanoate: step 2/4. Functionally, catalyzes the isomerization between 2-isopropylmalate and 3-isopropylmalate, via the formation of 2-isopropylmaleate. This is 3-isopropylmalate dehydratase large subunit from Akkermansia muciniphila (strain ATCC BAA-835 / DSM 22959 / JCM 33894 / BCRC 81048 / CCUG 64013 / CIP 107961 / Muc).